Consider the following 219-residue polypeptide: Endonuclease III (219 aa).

One can recognise a HhH domain in the interval 117-136; the sequence is MEELLTLPGVARKTANVVLA. [4Fe-4S] cluster contacts are provided by cysteine 197, cysteine 204, cysteine 207, and cysteine 213.

Belongs to the Nth/MutY family. Requires [4Fe-4S] cluster as cofactor.

The catalysed reaction is 2'-deoxyribonucleotide-(2'-deoxyribose 5'-phosphate)-2'-deoxyribonucleotide-DNA = a 3'-end 2'-deoxyribonucleotide-(2,3-dehydro-2,3-deoxyribose 5'-phosphate)-DNA + a 5'-end 5'-phospho-2'-deoxyribonucleoside-DNA + H(+). Functionally, DNA repair enzyme that has both DNA N-glycosylase activity and AP-lyase activity. The DNA N-glycosylase activity releases various damaged pyrimidines from DNA by cleaving the N-glycosidic bond, leaving an AP (apurinic/apyrimidinic) site. The AP-lyase activity cleaves the phosphodiester bond 3' to the AP site by a beta-elimination, leaving a 3'-terminal unsaturated sugar and a product with a terminal 5'-phosphate. This chain is Endonuclease III, found in Synechocystis sp. (strain ATCC 27184 / PCC 6803 / Kazusa).